Here is a 394-residue protein sequence, read N- to C-terminus: Cell division protein FtsZ (394 aa).

GTP-binding positions include 21 to 25, R29, 108 to 110, E139, R143, N166, and D187; these read GGGNN and GTG. The segment at 317-394 is disordered; it reads DKPSSQGRKA…EERRSRRTRR (78 aa). Composition is skewed to low complexity over residues 328 to 346 and 353 to 364; these read STGF…SGAS and SAHTSHSQSSES. The segment covering 365–388 has biased composition (basic and acidic residues); sequence VSERSHTTKDDDIPSFIRNREERR.

This sequence belongs to the FtsZ family. As to quaternary structure, homodimer. Polymerizes to form a dynamic ring structure in a strictly GTP-dependent manner. Interacts directly with several other division proteins.

It localises to the cytoplasm. Its function is as follows. Essential cell division protein that forms a contractile ring structure (Z ring) at the future cell division site. The regulation of the ring assembly controls the timing and the location of cell division. One of the functions of the FtsZ ring is to recruit other cell division proteins to the septum to produce a new cell wall between the dividing cells. Binds GTP and shows GTPase activity. The polypeptide is Cell division protein FtsZ (Staphylococcus epidermidis (strain ATCC 35984 / DSM 28319 / BCRC 17069 / CCUG 31568 / BM 3577 / RP62A)).